Here is a 172-residue protein sequence, read N- to C-terminus: Adenine phosphoribosyltransferase (172 aa).

Belongs to the purine/pyrimidine phosphoribosyltransferase family. In terms of assembly, homodimer.

It is found in the cytoplasm. The catalysed reaction is AMP + diphosphate = 5-phospho-alpha-D-ribose 1-diphosphate + adenine. Its pathway is purine metabolism; AMP biosynthesis via salvage pathway; AMP from adenine: step 1/1. Functionally, catalyzes a salvage reaction resulting in the formation of AMP, that is energically less costly than de novo synthesis. This Clostridium botulinum (strain ATCC 19397 / Type A) protein is Adenine phosphoribosyltransferase.